The chain runs to 455 residues: Outer capsid protein sigma-1 (455 aa).

The interval 1–307 (MDPRLREEVV…YPIADVSGGI (307 aa)) is tail. Positions 116-148 (LAELRVDHDNLVARVDTAERNIGSLTTELSTLT) form a coiled coil. N-linked (GlcNAc...) asparagine; by host glycosylation is found at asparagine 231, asparagine 264, and asparagine 282. The head stretch occupies residues 308-455 (GMSPNYRFRQ…MTVSYPRSFT (148 aa)).

Belongs to the orthoreovirus sigma-1 protein family. As to quaternary structure, homotrimer. Interacts (via the head region) with human F11R. In terms of processing, undergoes dramatic conformational rearrangements during viral disassembly in the endocytic pathway.

It localises to the virion. Fiber-like molecule that attaches the virion to the host cell membrane by binding to the primary receptor F11R/JAM-A and to sialic acid containing proteins (coreceptor). The interaction of sigma-1 with F11R is required for NF-kB activation and apoptosis. Binding to both sialic acid and F11R is required to induce maximal levels of apoptosis. In Reovirus type 3 (strain Dearing) (T3D), this protein is Outer capsid protein sigma-1 (S1).